The chain runs to 76 residues: Monocarboxylate transporter 1 (76 aa).

Helical transmembrane passes span 1 to 18 (LSIL…MGLA), 28 to 48 (IQYF…LAPL), and 53 to 73 (IGFC…SSVL). Residue Asp8 participates in H(+) binding. Arg12 is a (S)-lactate binding site.

It belongs to the major facilitator superfamily. Monocarboxylate porter (TC 2.A.1.13) family. Interacts with BSG; interaction mediates SLC16A1 targeting to the plasma membrane. Interacts with EMB; interaction mediates SLC16A1 targeting to the plasma membrane.

It is found in the cell membrane. The protein localises to the basolateral cell membrane. It localises to the apical cell membrane. It catalyses the reaction (S)-lactate(in) + H(+)(in) = (S)-lactate(out) + H(+)(out). The enzyme catalyses acetate(out) + H(+)(out) = acetate(in) + H(+)(in). The catalysed reaction is acetoacetate(out) + H(+)(out) = acetoacetate(in) + H(+)(in). It carries out the reaction pyruvate(out) + H(+)(out) = pyruvate(in) + H(+)(in). It catalyses the reaction (R)-3-hydroxybutanoate(out) + H(+)(out) = (R)-3-hydroxybutanoate(in) + H(+)(in). The enzyme catalyses 3-methyl-2-oxobutanoate(out) + H(+)(out) = 3-methyl-2-oxobutanoate(in) + H(+)(in). The catalysed reaction is 4-methyl-2-oxopentanoate(out) + H(+)(out) = 4-methyl-2-oxopentanoate(in) + H(+)(in). It carries out the reaction succinate(in) + 2 H(+)(in) = succinate(out) + 2 H(+)(out). Functionally, bidirectional proton-coupled monocarboxylate transporter. Catalyzes the rapid transport across the plasma membrane of many monocarboxylates such as lactate, pyruvate, acetate and the ketone bodies acetoacetate and beta-hydroxybutyrate, and thus contributes to the maintenance of intracellular pH. The transport direction is determined by the proton motive force and the concentration gradient of the substrate monocarboxylate. MCT1 is a major lactate exporter. Plays a role in cellular responses to a high-fat diet by modulating the cellular levels of lactate and pyruvate that contribute to the regulation of central metabolic pathways and insulin secretion, with concomitant effects on plasma insulin levels and blood glucose homeostasis. Facilitates the protonated monocarboxylate form of succinate export, that its transient protonation upon muscle cell acidification in exercising muscle and ischemic heart. Functions via alternate outward- and inward-open conformation states. Protonation and deprotonation is essential for the conformational transition. This chain is Monocarboxylate transporter 1 (SLC16A1), found in Meriones unguiculatus (Mongolian jird).